A 306-amino-acid chain; its full sequence is Proline-rich transmembrane protein 1 (306 aa).

Residues 1 to 142 (MSSEKSGLPD…PPPAPAQTAQ (142 aa)) are disordered. At 1–223 (MSSEKSGLPD…LEPRRPPHDY (223 aa)) the chain is on the cytoplasmic side. A compositionally biased stretch (pro residues) spans 15–36 (TSPPPYNAPQPPAEPPAPPPQA). Residues 40–49 (SHHHHHHHYH) show a composition bias toward basic residues. Pro residues-rich tracts occupy residues 87–111 (HAPPGPAAGAPPPGCATLPRMPPDP) and 121–137 (PLPPPPPAAAAPPPPAP). The helical transmembrane segment at 224 to 244 (MPIAVLTTICCFWPTGIIAIF) threads the bilayer. The Extracellular segment spans residues 245-275 (KAVQVRTALARGDMVSAEIASREARNFSFIS). Residues 276–296 (LAVGIAAMVLCTILTVVIIIA) constitute an intramembrane region (helical). The Extracellular portion of the chain corresponds to 297–306 (AQHHENYWDP).

This sequence belongs to the CD225/Dispanin family. Component of the outer core of AMPAR complex. AMPAR complex consists of an inner core made of 4 pore-forming GluA/GRIA proteins (GRIA1, GRIA2, GRIA3 and GRIA4) and 4 major auxiliary subunits arranged in a twofold symmetry. One of the two pairs of distinct binding sites is occupied either by CNIH2, CNIH3 or CACNG2, CACNG3. The other harbors CACNG2, CACNG3, CACNG4, CACNG8 or GSG1L. This inner core of AMPAR complex is complemented by outer core constituents binding directly to the GluA/GRIA proteins at sites distinct from the interaction sites of the inner core constituents. Outer core constituents include at least PRRT1, PRRT2, CKAMP44/SHISA9, FRRS1L and NRN1. The proteins of the inner and outer core serve as a platform for other, more peripherally associated AMPAR constituents. Alone or in combination, these auxiliary subunits control the gating and pharmacology of the AMPAR complex and profoundly impact their biogenesis and protein processing.

The protein localises to the cell membrane. It localises to the synapse. In terms of biological role, required to maintain a pool of extrasynaptic AMPA-regulated glutamate receptors (AMPAR) which is necessary for synapse development and function. Regulates basal AMPAR function and synaptic transmission during development but is dispensable at mature hippocampal synapses. Plays a role in regulating basal phosphorylation levels of glutamate receptor GRIA1 and promotes GRIA1 and GRIA2 cell surface expression. The sequence is that of Proline-rich transmembrane protein 1 from Homo sapiens (Human).